The sequence spans 257 residues: MAQRMTTQLLLLLVWVAVVGEAQTRIAWARTELLNVCMNAKHHKEKPGPEDKLHEQCRPWRKNACCSTNTSQEAHKDVSYLYRFNWNHCGEMAPACKRHFIQDTCLYECSPNLGPWIQQVDQSWRKERVLNVPLCKEDCEQWWEDCRTSYTCKSNWHKGWNWTSGFNKCAVGAACQPFHFYFPTPTVLCNEIWTHSYKVSNYSRGSGRCIQMWFDPAQGNPNEEVARFYAAAMSGAGPWAAWPFLLSLALMLLWLLS.

The signal sequence occupies residues 1-24; that stretch reads MAQRMTTQLLLLLVWVAVVGEAQT. 8 cysteine pairs are disulfide-bonded: Cys37–Cys65, Cys57–Cys105, Cys66–Cys109, Cys89–Cys175, Cys96–Cys146, Cys135–Cys209, Cys139–Cys189, and Cys152–Cys169. N-linked (GlcNAc...) asparagine glycosylation is present at Asn69. Folate-binding positions include Asp103, Tyr107, 124–128, 157–162, and Ser196; these read WRKER and HKGWNW. The N-linked (GlcNAc...) asparagine glycan is linked to Asn161. Asn201 carries an N-linked (GlcNAc...) asparagine glycan. Ser234 carries GPI-anchor amidated serine lipidation. The propeptide at 235–257 is removed in mature form; it reads GAGPWAAWPFLLSLALMLLWLLS.

The protein belongs to the folate receptor family. The secreted form is derived from the membrane-bound form either by cleavage of the GPI anchor, or/and by proteolysis catalyzed by a metalloprotease. Primarily expressed in tissues of epithelial origin. Expression is increased in malignant tissues. Expressed in kidney, lung and cerebellum. Detected in placenta and thymus epithelium.

Its subcellular location is the cell membrane. The protein localises to the apical cell membrane. The protein resides in the basolateral cell membrane. It localises to the secreted. It is found in the cytoplasmic vesicle. Its subcellular location is the clathrin-coated vesicle. The protein localises to the endosome. Binds to folate and reduced folic acid derivatives and mediates delivery of 5-methyltetrahydrofolate and folate analogs into the interior of cells. Has high affinity for folate and folic acid analogs at neutral pH. Exposure to slightly acidic pH after receptor endocytosis triggers a conformation change that strongly reduces its affinity for folates and mediates their release. Required for normal embryonic development and normal cell proliferation. This Homo sapiens (Human) protein is Folate receptor alpha (FOLR1).